Consider the following 1002-residue polypeptide: Ephrin type-B receptor 5 (1002 aa).

An N-terminal signal peptide occupies residues 1–29 (MDSNADISARRVSGMDWLWLVCFFHLVTS). The Extracellular segment spans residues 30–564 (LEEILLDTTG…AQDRLPLIVG (535 aa)). In terms of domain architecture, Eph LBD spans 31–213 (EEILLDTTGE…FFYKCPAVVK (183 aa)). Fibronectin type-III domains lie at 344-452 (APRD…TSQS) and 453-548 (VPSA…TLMA). An N-linked (GlcNAc...) asparagine glycan is attached at Asn446. Residues 565–585 (SALGGLAFLVIAAIAILAIIF) traverse the membrane as a helical segment. At 586-1002 (KSKRRETPYT…HLNQLEPVEV (417 aa)) the chain is on the cytoplasmic side. The 264-residue stretch at 637-900 (IKIEEVIGSG…QIVSALDKMI (264 aa)) folds into the Protein kinase domain. Residues 643–651 (IGSGEFGEV) and Lys669 contribute to the ATP site. Asp762 acts as the Proton acceptor in catalysis. Residues 906–928 (LKATGTGSSRPSQPLLSNSPPDF) are disordered. Polar residues predominate over residues 910–928 (GTGSSRPSQPLLSNSPPDF). Residues 929–993 (PSLSNAHEWL…LNSIQLMKVH (65 aa)) form the SAM domain. The PDZ-binding signature appears at 1000–1002 (VEV).

Belongs to the protein kinase superfamily. Tyr protein kinase family. Ephrin receptor subfamily. In terms of tissue distribution, most abundant in thymus and detectable in brain, retina, kidney, lung and heart. Not detected in skeletal muscle and liver.

Its subcellular location is the membrane. It carries out the reaction L-tyrosyl-[protein] + ATP = O-phospho-L-tyrosyl-[protein] + ADP + H(+). Its function is as follows. Receptor for members of the ephrin-B family. The sequence is that of Ephrin type-B receptor 5 (EPHB5) from Gallus gallus (Chicken).